We begin with the raw amino-acid sequence, 279 residues long: Methyltransferase trt5 (279 aa).

S-adenosyl-L-methionine is bound by residues 124 to 125 (DI) and 152 to 153 (DV).

This sequence belongs to the class I-like SAM-binding methyltransferase superfamily. In terms of assembly, homodimer.

Its pathway is secondary metabolite biosynthesis; terpenoid biosynthesis. In terms of biological role, methyltransferase; part of the gene cluster that mediates the biosynthesis of terretonin, a fungal meroterpenoid that acts as a mycotoxin. The first step of the pathway is the synthesis of 3,5-dimethylorsellinic acid (DMOA) by the polyketide synthase trt4. DMOA is then prenylated into farnesyl-DMOA by the polyprenyl transferase trt2. Methylation by the methyltransferase trt5 then leads to farnesyl-DMOA methyl ester which is further subject to epoxidation by the FAD-dependent monooxygenase trt8 to yield epoxyfarnesyl-DMOA methyl ester. Cyclization of epoxyfarnesyl-DMOA methyl ester by the terpene cyclase trt1 leads to a tetracycle intermediate which is in turn converted to preterretonin. Dehydrogenase trt9 comes next to transform preterretonin to preterrenoid. The FAD-dependent monooxygenase trt3 is then required for the C-hydroxylation at C16 of preterrenoid to yield terrenoid. The cytochrome P450 trt6 catalyzes three successive oxidations to transform terrenoid into an unstable intermediate, which then undergoes the D-ring expansion and unusual rearrangement of the methoxy group to afford the core skeleton of terretonin. Trt14 catalyzes the D-ring expansion of terretonin involving intramolecular methoxy rearrangement as well as the hydrolysis of the expanded D-ring and the methyl ester moiety. Finally, the nonheme iron-dependent dioxygenase trt7 accomplishes the last two oxidation reactions steps to complete the biosynthesis of terretonin. Terretonin C is produced via spontaneous decarboxylation of the terretonin precursor. Another shunt product of the terretonin biosynthesis is dihydrofarnesyl-DMOA, derived from epoxyfarnesyl-DMOA through hydrolysis of the epoxide. The protein is Methyltransferase trt5 of Aspergillus terreus (strain NIH 2624 / FGSC A1156).